A 115-amino-acid polypeptide reads, in one-letter code: NADH-ubiquinone oxidoreductase chain 3 (115 aa).

Helical transmembrane passes span 4–24, 55–75, and 87–107; these read LMVM…AFWL, FFLV…LLPL, and MMLT…YEWM.

The protein belongs to the complex I subunit 3 family. As to quaternary structure, core subunit of respiratory chain NADH dehydrogenase (Complex I) which is composed of 45 different subunits. Interacts with TMEM186. Interacts with TMEM242.

Its subcellular location is the mitochondrion inner membrane. It catalyses the reaction a ubiquinone + NADH + 5 H(+)(in) = a ubiquinol + NAD(+) + 4 H(+)(out). Core subunit of the mitochondrial membrane respiratory chain NADH dehydrogenase (Complex I) which catalyzes electron transfer from NADH through the respiratory chain, using ubiquinone as an electron acceptor. Essential for the catalytic activity of complex I. The chain is NADH-ubiquinone oxidoreductase chain 3 from Peromyscus mexicanus (Mexican deer mouse).